Consider the following 92-residue polypeptide: Acylphosphatase (92 aa).

One can recognise an Acylphosphatase-like domain in the interval 6 to 92 (RMYVIVYGIV…TGEFASFDTY (87 aa)). Catalysis depends on residues Arg-21 and Asn-39.

Belongs to the acylphosphatase family.

The enzyme catalyses an acyl phosphate + H2O = a carboxylate + phosphate + H(+). The chain is Acylphosphatase (acyP) from Sulfolobus acidocaldarius (strain ATCC 33909 / DSM 639 / JCM 8929 / NBRC 15157 / NCIMB 11770).